A 297-amino-acid polypeptide reads, in one-letter code: Phosphatidylserine decarboxylase proenzyme (297 aa).

Active-site charge relay system; for autoendoproteolytic cleavage activity residues include aspartate 100, histidine 157, and serine 263. Catalysis depends on serine 263, which acts as the Schiff-base intermediate with substrate; via pyruvic acid; for decarboxylase activity. Serine 263 bears the Pyruvic acid (Ser); by autocatalysis mark.

The protein belongs to the phosphatidylserine decarboxylase family. PSD-B subfamily. Prokaryotic type I sub-subfamily. In terms of assembly, heterodimer of a large membrane-associated beta subunit and a small pyruvoyl-containing alpha subunit. Requires pyruvate as cofactor. In terms of processing, is synthesized initially as an inactive proenzyme. Formation of the active enzyme involves a self-maturation process in which the active site pyruvoyl group is generated from an internal serine residue via an autocatalytic post-translational modification. Two non-identical subunits are generated from the proenzyme in this reaction, and the pyruvate is formed at the N-terminus of the alpha chain, which is derived from the carboxyl end of the proenzyme. The autoendoproteolytic cleavage occurs by a canonical serine protease mechanism, in which the side chain hydroxyl group of the serine supplies its oxygen atom to form the C-terminus of the beta chain, while the remainder of the serine residue undergoes an oxidative deamination to produce ammonia and the pyruvoyl prosthetic group on the alpha chain. During this reaction, the Ser that is part of the protease active site of the proenzyme becomes the pyruvoyl prosthetic group, which constitutes an essential element of the active site of the mature decarboxylase.

Its subcellular location is the cell membrane. It catalyses the reaction a 1,2-diacyl-sn-glycero-3-phospho-L-serine + H(+) = a 1,2-diacyl-sn-glycero-3-phosphoethanolamine + CO2. It functions in the pathway phospholipid metabolism; phosphatidylethanolamine biosynthesis; phosphatidylethanolamine from CDP-diacylglycerol: step 2/2. In terms of biological role, catalyzes the formation of phosphatidylethanolamine (PtdEtn) from phosphatidylserine (PtdSer). This chain is Phosphatidylserine decarboxylase proenzyme, found in Actinobacillus pleuropneumoniae serotype 5b (strain L20).